Consider the following 153-residue polypeptide: UPF0179 protein AF_2154 (153 aa).

The protein belongs to the UPF0179 family.

The protein is UPF0179 protein AF_2154 of Archaeoglobus fulgidus (strain ATCC 49558 / DSM 4304 / JCM 9628 / NBRC 100126 / VC-16).